Reading from the N-terminus, the 406-residue chain is Acetylornithine aminotransferase (406 aa).

Pyridoxal 5'-phosphate is bound by residues 108–109 and Phe141; that span reads GA. Arg144 contacts N(2)-acetyl-L-ornithine. 226-229 serves as a coordination point for pyridoxal 5'-phosphate; it reads DEVQ. Lys255 is modified (N6-(pyridoxal phosphate)lysine). Thr283 provides a ligand contact to N(2)-acetyl-L-ornithine. A pyridoxal 5'-phosphate-binding site is contributed by Thr284.

Belongs to the class-III pyridoxal-phosphate-dependent aminotransferase family. ArgD subfamily. As to quaternary structure, homodimer. Pyridoxal 5'-phosphate is required as a cofactor.

It is found in the cytoplasm. It carries out the reaction N(2)-acetyl-L-ornithine + 2-oxoglutarate = N-acetyl-L-glutamate 5-semialdehyde + L-glutamate. It functions in the pathway amino-acid biosynthesis; L-arginine biosynthesis; N(2)-acetyl-L-ornithine from L-glutamate: step 4/4. The sequence is that of Acetylornithine aminotransferase from Pseudomonas putida (strain ATCC 47054 / DSM 6125 / CFBP 8728 / NCIMB 11950 / KT2440).